The primary structure comprises 939 residues: Trafficking kinesin-binding protein 1 (939 aa).

Residues 46-353 form the HAP1 N-terminal domain; that stretch reads LEEQLPHYKL…EELKNLRNKT (308 aa). The stretch at 106–354 forms a coiled coil; the sequence is KTYNDIDAVT…ELKNLRNKTM (249 aa). The interval 359-509 is interaction with HGS; that stretch reads RYHSLGLFPM…SLRRENYLSE (151 aa). An O-linked (GlcNAc) serine glycan is attached at Ser-444. The tract at residues 472–492 is disordered; the sequence is LGNEDHNKKPGTPGTPGSHDL. A coiled-coil region spans residues 490–524; sequence HDLETALRRLSLRRENYLSERRFFEEEQERKLREL. A Phosphoserine modification is found at Ser-534. The interval 655-669 is interaction with OGT; it reads PGKCMSQTNSTFTFT. O-linked (GlcNAc) serine glycosylation is found at Ser-677 and Ser-716. Phosphoserine is present on residues Ser-716 and Ser-905.

It belongs to the milton family. In terms of assembly, interacts with RHOT1 and RHOT2. Found in a complex with KIF5B, OGT, RHOT1 and RHOT2. Interacts with HGS. Interacts with GABRA1. Interacts with KIF5C. Interacts with OGT; stable interaction is not required for glycosylation of this protein by OGT. Isoform 1 interacts with OGT. In terms of processing, O-glycosylated. Glycosylated by OGT; glycosylation in response to increased extracellular glucose levels is required for and leads to regulation of mitochondrial motility by OGT. In terms of tissue distribution, widely expressed with the greatest expression in brain, liver and kidney. Detected throughout the CNS, including the cortex, hippocamps, thalamus and various subcortical nuclei of the forebrain and midbrain, the granule of Purkinje layers of the cerebellum and the gray matter of the spinal cord. High level detected in lower moter neurons (at protein level).

The protein localises to the cytoplasm. It is found in the nucleus. The protein resides in the mitochondrion. It localises to the early endosome. Its subcellular location is the endosome. The protein localises to the mitochondrion membrane. It is found in the cell cortex. Involved in the regulation of endosome-to-lysosome trafficking, including endocytic trafficking of EGF-EGFR complexes and GABA-A receptors. Involved in mitochondrial motility. When O-glycosylated, abolishes mitochondrial motility. Crucial for recruiting OGT to the mitochondrial surface of neuronal processes. TRAK1 and RHOT form an essential protein complex that links KIF5 to mitochondria for light chain-independent, anterograde transport of mitochondria. The protein is Trafficking kinesin-binding protein 1 (Trak1) of Mus musculus (Mouse).